The chain runs to 96 residues: Colicin-K immunity protein (96 aa).

A helical membrane pass occupies residues Ala73–Leu93.

It is found in the cell membrane. Functionally, this protein is able to protect a cell, which harbors the plasmid ColK encoding colicin K, against colicin K. This is Colicin-K immunity protein (cki) from Escherichia coli.